The sequence spans 119 residues: Ribonuclease P protein component (119 aa).

Belongs to the RnpA family. In terms of assembly, consists of a catalytic RNA component (M1 or rnpB) and a protein subunit.

The catalysed reaction is Endonucleolytic cleavage of RNA, removing 5'-extranucleotides from tRNA precursor.. In terms of biological role, RNaseP catalyzes the removal of the 5'-leader sequence from pre-tRNA to produce the mature 5'-terminus. It can also cleave other RNA substrates such as 4.5S RNA. The protein component plays an auxiliary but essential role in vivo by binding to the 5'-leader sequence and broadening the substrate specificity of the ribozyme. This Syntrophomonas wolfei subsp. wolfei (strain DSM 2245B / Goettingen) protein is Ribonuclease P protein component.